Here is an 87-residue protein sequence, read N- to C-terminus: Acylphosphatase (87 aa).

Residues 2 to 87 (RLTALVSGTV…ATGLRDFHVY (86 aa)) enclose the Acylphosphatase-like domain. Active-site residues include arginine 17 and asparagine 35.

The protein belongs to the acylphosphatase family.

It carries out the reaction an acyl phosphate + H2O = a carboxylate + phosphate + H(+). The chain is Acylphosphatase (acyP) from Deinococcus geothermalis (strain DSM 11300 / CIP 105573 / AG-3a).